Here is a 227-residue protein sequence, read N- to C-terminus: Triosephosphate isomerase (227 aa).

Residue 6 to 8 (NLK) coordinates substrate. Histidine 85 functions as the Electrophile in the catalytic mechanism. Residue glutamate 152 is the Proton acceptor of the active site. Residues glycine 158 and serine 188 each coordinate substrate.

This sequence belongs to the triosephosphate isomerase family. As to quaternary structure, homodimer.

The protein resides in the cytoplasm. It carries out the reaction D-glyceraldehyde 3-phosphate = dihydroxyacetone phosphate. It functions in the pathway carbohydrate biosynthesis; gluconeogenesis. The protein operates within carbohydrate degradation; glycolysis; D-glyceraldehyde 3-phosphate from glycerone phosphate: step 1/1. In terms of biological role, involved in the gluconeogenesis. Catalyzes stereospecifically the conversion of dihydroxyacetone phosphate (DHAP) to D-glyceraldehyde-3-phosphate (G3P). The sequence is that of Triosephosphate isomerase from Campylobacter concisus (strain 13826).